Reading from the N-terminus, the 179-residue chain is Orotate phosphoribosyltransferase (179 aa).

5-phospho-alpha-D-ribose 1-diphosphate contacts are provided by residues arginine 94, lysine 95, lysine 98, histidine 100, and 120-128 (EDTSTTGNS). Positions 124 and 152 each coordinate orotate.

This sequence belongs to the purine/pyrimidine phosphoribosyltransferase family. PyrE subfamily. In terms of assembly, homodimer. Requires Mg(2+) as cofactor.

The catalysed reaction is orotidine 5'-phosphate + diphosphate = orotate + 5-phospho-alpha-D-ribose 1-diphosphate. It participates in pyrimidine metabolism; UMP biosynthesis via de novo pathway; UMP from orotate: step 1/2. Functionally, catalyzes the transfer of a ribosyl phosphate group from 5-phosphoribose 1-diphosphate to orotate, leading to the formation of orotidine monophosphate (OMP). The sequence is that of Orotate phosphoribosyltransferase from Mycobacterium avium (strain 104).